Consider the following 416-residue polypeptide: Serine hydroxymethyltransferase 1 (416 aa).

(6S)-5,6,7,8-tetrahydrofolate is bound by residues leucine 121 and 125–127 (GHL). Residue lysine 229 is modified to N6-(pyridoxal phosphate)lysine. (6S)-5,6,7,8-tetrahydrofolate-binding positions include glutamate 245 and 354-356 (SPF).

The protein belongs to the SHMT family. Homodimer. Pyridoxal 5'-phosphate serves as cofactor.

It is found in the cytoplasm. It carries out the reaction (6R)-5,10-methylene-5,6,7,8-tetrahydrofolate + glycine + H2O = (6S)-5,6,7,8-tetrahydrofolate + L-serine. The protein operates within one-carbon metabolism; tetrahydrofolate interconversion. It participates in amino-acid biosynthesis; glycine biosynthesis; glycine from L-serine: step 1/1. In terms of biological role, catalyzes the reversible interconversion of serine and glycine with tetrahydrofolate (THF) serving as the one-carbon carrier. This reaction serves as the major source of one-carbon groups required for the biosynthesis of purines, thymidylate, methionine, and other important biomolecules. Also exhibits THF-independent aldolase activity toward beta-hydroxyamino acids, producing glycine and aldehydes, via a retro-aldol mechanism. In Photobacterium profundum (strain SS9), this protein is Serine hydroxymethyltransferase 1.